The following is a 121-amino-acid chain: Large ribosomal subunit protein bL20 (121 aa).

Belongs to the bacterial ribosomal protein bL20 family.

Its function is as follows. Binds directly to 23S ribosomal RNA and is necessary for the in vitro assembly process of the 50S ribosomal subunit. It is not involved in the protein synthesizing functions of that subunit. The polypeptide is Large ribosomal subunit protein bL20 (Mycoplasma mycoides subsp. mycoides SC (strain CCUG 32753 / NCTC 10114 / PG1)).